The chain runs to 1862 residues: Ankyrin-1 (1862 aa).

The 89 kDa domain stretch occupies residues 1-827 (MGFCKADAAT…DELVGSKAER (827 aa)). ANK repeat units follow at residues 40-69 (NGLN…ILET), 73-102 (KGNT…NVNA), 106-135 (KGFT…NQNV), 139-168 (DGFT…KGKV), 170-197 (LPAL…NPDV), 201-230 (TGFT…SVNF), 234-263 (NGIT…QIET), 267-296 (DELT…PIQA), 300-329 (NGLS…EIDD), 333-362 (DHLT…KPNS), 366-395 (NGFT…SIDA), 399-428 (SGLT…SPNV), 432-461 (KVET…KANA), 465-494 (DDQT…SPNL), 498-527 (AGHT…SQAC), 531-560 (KGFT…HPNA), 564-593 (NGLT…SPHS), 597-626 (NGYT…SANA), 630-659 (QGVT…NGNL), 663-692 (SGLT…TVDA), 696-725 (MGYT…DVNA), 729-758 (LGYS…SPNE), and 762-791 (NGTT…ETSV). Phosphoserine is present on lysine 55. Position 101 is a (3S)-3-hydroxyasparagine; by HIF1AN; partial (asparagine 101). (3S)-3-hydroxyasparagine; by HIF1AN is present on asparagine 229. Serine 425 carries the phosphoserine modification. 2 positions are modified to (3S)-3-hydroxyasparagine; by HIF1AN: asparagine 427 and asparagine 460. (3S)-3-hydroxyasparagine; by HIF1AN is present on residues asparagine 625 and asparagine 658. Position 691 is a (3S)-3-hydroxyaspartate; by HIF1AN (aspartate 691). Asparagine 724 is subject to (3S)-3-hydroxyasparagine; by HIF1AN. Position 755 is a phosphoserine (serine 755). Asparagine 757 carries the (3S)-3-hydroxyasparagine; by HIF1AN modification. Phosphoserine is present on residues serine 777, serine 813, serine 830, and serine 852. The tract at residues 812–834 (VSEDEGDELVGSKAERRDSRDVG) is disordered. The segment covering 824 to 834 (KAERRDSRDVG) has biased composition (basic and acidic residues). Residue threonine 862 is modified to Phosphothreonine. The segment at 872–900 (DQEQASKEYDEDSLIPSSPATETSDNISP) is disordered. Residues 886 to 900 (IPSSPATETSDNISP) are compositionally biased toward polar residues. ZU5 domains lie at 909–1064 (FLVS…IMSR) and 1066–1212 (CQDY…LSDC). Phosphothreonine is present on threonine 957. The residue at position 1069 (tyrosine 1069) is a Phosphotyrosine. Serine 1078 bears the Phosphoserine mark. A UPA domain region spans residues 1197 to 1331 (ANFTTNVSAR…PVKVRDSSRE (135 aa)). A phosphothreonine mark is found at threonine 1374 and threonine 1376. 2 positions are modified to phosphoserine: serine 1386 and serine 1388. The tract at residues 1387-1862 (ESRLGFTSDT…KRASLKRGKQ (476 aa)) is 55 kDa regulatory domain. Threonine 1396 carries the post-translational modification Phosphothreonine. Positions 1399–1483 (VEMRMAVIRE…EIVNMLEGSG (85 aa)) constitute a Death domain. Residues serine 1424, serine 1473, and serine 1482 each carry the phosphoserine modification. The interval 1481–1506 (GSGRQSRNLKPERRHGDREYSLSPSQ) is disordered. Residues 1489 to 1500 (LKPERRHGDREY) are compositionally biased toward basic and acidic residues. 3 positions are modified to phosphoserine: serine 1519, serine 1529, and serine 1612. Disordered stretches follow at residues 1598–1720 (EGAH…GPHS) and 1744–1767 (VSTR…KEPS). Basic and acidic residues predominate over residues 1637 to 1647 (EGQRSEKKRQE). The segment covering 1648–1666 (VSGTEQDTETEVSLVSGQQ) has biased composition (polar residues). 3 positions are modified to phosphoserine: serine 1660, serine 1675, and serine 1685. Positions 1681 to 1694 (VLDRSQARTLDWDK) are enriched in basic and acidic residues. Polar residues predominate over residues 1695–1720 (QGSTAVHPQEATQSSWQEEVTQGPHS).

In terms of assembly, component of the ankyrin-1 complex in the erythrocyte, composed of ANK1, RHCE, RHAG, SLC4A1, EPB42, GYPA, GYPB and AQP1. Interacts with a number of integral membrane proteins and cytoskeletal proteins. Interacts (via N-terminus) with SPTB/spectrin (beta chain). Also interacts with TTN/titin. Isoform Mu17 interacts with OBSCN isoform 3/obscurin. Interacts with HIF1AN. Interacts (via ANK 1-5 repeats) with RHCE; this interaction mediates the primary membrane attachment site for ANK1. Interacts (via ANK 1-2 repeats) with AQP1 (via the N-terminal). Interacts (via ANK 1-13 repeats) with EPB42. Interacts directly with SLC4A1 (via the cytoplasmic domain); this interaction is mediated by the SLC4A1 Band 3-II and Band 3-III dimers. In terms of processing, regulated by phosphorylation. Acylated by palmitic acid group(s). Post-translationally, hydroxylated by HIF1AN at several asparagine and 1 aspartate residue within ANK repeat region; hydroxylation seems to increase the conformational stability of this region and may also modulate protein-protein interactions mediated by the ANK repeat region.

The protein resides in the cytoplasm. Its subcellular location is the cytoskeleton. It is found in the membrane. The protein localises to the sarcoplasmic reticulum. Functionally, component of the ankyrin-1 complex, a multiprotein complex involved in the stability and shape of the erythrocyte membrane. Attaches integral membrane proteins to cytoskeletal elements; binds to the erythrocyte membrane protein band 4.2, to Na-K ATPase, to the lymphocyte membrane protein GP85, and to the cytoskeletal proteins fodrin, tubulin, vimentin and desmin. Erythrocyte ankyrins also link spectrin (beta chain) to the cytoplasmic domain of the erythrocytes anion exchange protein; they retain most or all of these binding functions. The polypeptide is Ankyrin-1 (Mus musculus (Mouse)).